Consider the following 289-residue polypeptide: 4-hydroxy-3-methylbut-2-enyl diphosphate reductase (289 aa).

Cysteine 12 is a binding site for [4Fe-4S] cluster. Histidine 44 and histidine 81 together coordinate (2E)-4-hydroxy-3-methylbut-2-enyl diphosphate. Dimethylallyl diphosphate-binding residues include histidine 44 and histidine 81. Histidine 44 and histidine 81 together coordinate isopentenyl diphosphate. Residue cysteine 103 participates in [4Fe-4S] cluster binding. Histidine 130 serves as a coordination point for (2E)-4-hydroxy-3-methylbut-2-enyl diphosphate. Histidine 130 lines the dimethylallyl diphosphate pocket. An isopentenyl diphosphate-binding site is contributed by histidine 130. Glutamate 132 (proton donor) is an active-site residue. Threonine 174 contacts (2E)-4-hydroxy-3-methylbut-2-enyl diphosphate. Residue cysteine 202 participates in [4Fe-4S] cluster binding. Residues serine 230, asparagine 232, and serine 273 each coordinate (2E)-4-hydroxy-3-methylbut-2-enyl diphosphate. The dimethylallyl diphosphate site is built by serine 230, asparagine 232, and serine 273. Residues serine 230, asparagine 232, and serine 273 each coordinate isopentenyl diphosphate.

Belongs to the IspH family. [4Fe-4S] cluster serves as cofactor.

The enzyme catalyses isopentenyl diphosphate + 2 oxidized [2Fe-2S]-[ferredoxin] + H2O = (2E)-4-hydroxy-3-methylbut-2-enyl diphosphate + 2 reduced [2Fe-2S]-[ferredoxin] + 2 H(+). It carries out the reaction dimethylallyl diphosphate + 2 oxidized [2Fe-2S]-[ferredoxin] + H2O = (2E)-4-hydroxy-3-methylbut-2-enyl diphosphate + 2 reduced [2Fe-2S]-[ferredoxin] + 2 H(+). Its pathway is isoprenoid biosynthesis; dimethylallyl diphosphate biosynthesis; dimethylallyl diphosphate from (2E)-4-hydroxy-3-methylbutenyl diphosphate: step 1/1. The protein operates within isoprenoid biosynthesis; isopentenyl diphosphate biosynthesis via DXP pathway; isopentenyl diphosphate from 1-deoxy-D-xylulose 5-phosphate: step 6/6. Its function is as follows. Catalyzes the conversion of 1-hydroxy-2-methyl-2-(E)-butenyl 4-diphosphate (HMBPP) into a mixture of isopentenyl diphosphate (IPP) and dimethylallyl diphosphate (DMAPP). Acts in the terminal step of the DOXP/MEP pathway for isoprenoid precursor biosynthesis. The sequence is that of 4-hydroxy-3-methylbut-2-enyl diphosphate reductase from Treponema denticola (strain ATCC 35405 / DSM 14222 / CIP 103919 / JCM 8153 / KCTC 15104).